We begin with the raw amino-acid sequence, 459 residues long: Cysteine--tRNA ligase (459 aa).

Cys28 provides a ligand contact to Zn(2+). Residues 30-40 (VTIYDLCHIGH) carry the 'HIGH' region motif. Zn(2+) is bound by residues Cys209, His234, and Glu238. The 'KMSKS' region motif lies at 266 to 270 (KMSKS). Lys269 lines the ATP pocket.

It belongs to the class-I aminoacyl-tRNA synthetase family. Monomer. The cofactor is Zn(2+).

The protein localises to the cytoplasm. The catalysed reaction is tRNA(Cys) + L-cysteine + ATP = L-cysteinyl-tRNA(Cys) + AMP + diphosphate. This chain is Cysteine--tRNA ligase, found in Shewanella baltica (strain OS223).